We begin with the raw amino-acid sequence, 51 residues long: uncharacterized protein (51 aa).

This is an uncharacterized protein from Enterobacteria phage T4 (Bacteriophage T4).